We begin with the raw amino-acid sequence, 95 residues long: RING finger protein Z (95 aa).

Glycine 2 carries N-myristoyl glycine; by host lipidation. The segment at 38 to 74 adopts an RING-type; atypical zinc-finger fold; sequence CKRCWFATKGLIACSDHYLCLNCLTIMLSDGNFCEVC. The PTAP/PSAP motif motif lies at 88 to 91; that stretch reads PSAP.

This sequence belongs to the arenaviridae Z protein family. In terms of assembly, interacts with protein NP; this interaction probably directs the encapsidated genome to budding sites. Interacts (via RING domain) with polymerase L; this interaction inhibits viral transcription and replication, Z partially blocks the product exit tunnel for the releasing nascent RNA product. Interacts with the glycoprotein complex; this interaction plays a role in virion budding. Interacts with host eIF4E; this interaction results in eIF4E reduced affinity for its substrate, the 5'-m7 G cap structure. Interacts (via late-budding domain) with host TSG101; this interaction is essential for budding and release of viral particles. Interacts with host RPLP0; this interaction may serve to load ribosome-like particles inside the virion. Interacts with host PML; this interaction induces PML bodies redistribution in the cytoplasm upon viral infection. Myristoylation is required for the role of RING finger protein Z in assembly and budding.

Its subcellular location is the virion. It localises to the host cytoplasm. The protein localises to the host perinuclear region. The protein resides in the host cell membrane. Functionally, plays a crucial role in virion assembly and budding. Expressed late in the virus life cycle, it acts as an inhibitor of viral transcription and RNA synthesis by interacting with the viral polymerase L. Presumably recruits the NP encapsidated genome to cellular membranes at budding sites via direct interaction with NP. Plays critical roles in the final steps of viral release by interacting with host TSG101, a member of the vacuolar protein-sorting pathway and using other cellular host proteins involved in vesicle formation pathway. The budding of the virus progeny occurs after association of protein Z with the viral glycoprotein complex SSP-GP1-GP2 at the cell periphery, step that requires myristoylation of protein Z. Also selectively represses protein production by associating with host eIF4E. In cell-based minigenome assay, has an inhibitory effect on the ribonucleoprotein machinery (vRNP), which is responsible for the replication and transcription of the viral genome. This chain is RING finger protein Z, found in Sooretamys angouya (Paraguayan rice rat).